The following is a 444-amino-acid chain: MITIKKGLELPITGGPEQVIHNGPAINHVATLGEEYIGLRPTMKIKVGDKVQKGQVLFEDKKNLGVKYTALASGTILEINRGAKRVLQSVVIAVEGDDSVAFSKHDAGSLATLDAQLVRTNLIDSGLWTALRTRPFSKVPAVDATAAGIFVTAIDTQPLAADPAVVIAEHKDDFANGLTLLAKLTEGKVFLCKAPGADIPAANAQVEEFAGIHPAGLVGTHIHNLLPASAKRSVWHIGYQDVIAIGQLFTQGVLNTERVFAIGGPKAKKPRLVRSRLGASLVELMADETQAGDVRVISGSVLNGRTAAGVHAYAGRYHQQITVLEEGREQEFFGWAMPGGDKFSITRSFLSHLSPSRLFNMTTSTGGSERAMVPIGNYERVVPLDVLPTLLLRDLLSGDFDSAVTLGALELDEEDLALCTFVCPGKYDYGSYLRDCLDTIEREG.

Belongs to the NqrA family. Composed of six subunits; NqrA, NqrB, NqrC, NqrD, NqrE and NqrF.

It catalyses the reaction a ubiquinone + n Na(+)(in) + NADH + H(+) = a ubiquinol + n Na(+)(out) + NAD(+). In terms of biological role, NQR complex catalyzes the reduction of ubiquinone-1 to ubiquinol by two successive reactions, coupled with the transport of Na(+) ions from the cytoplasm to the periplasm. NqrA to NqrE are probably involved in the second step, the conversion of ubisemiquinone to ubiquinol. The protein is Na(+)-translocating NADH-quinone reductase subunit A of Shewanella denitrificans (strain OS217 / ATCC BAA-1090 / DSM 15013).